The primary structure comprises 209 residues: MAGIKVFGHPASTATRRVLIALHEKNLDFEFVHIELKDGEHKKEPFIFRNPFGKVPAFEDGDFKLFESRAITQYIAHFYSDKGNQLVSLGSKDIAGIAMGIEIESHEFDPVGSKLVWEQVLKPLYGMTTDKTVVEEEEAKLAKVLDVYEHRLGESKYLASDKFTLVDLHTIPVIQYLLGTPTKKLFDERPHVSAWVADITSRPSAKKVL.

Residues 2–83 (AGIKVFGHPA…YIAHFYSDKG (82 aa)) enclose the GST N-terminal domain. Glutathione is bound by residues 12–13 (ST), 41–42 (HK), 54–55 (KV), and 67–68 (ES). One can recognise a GST C-terminal domain in the interval 90–209 (GSKDIAGIAM…TSRPSAKKVL (120 aa)).

It belongs to the GST superfamily. Phi family.

Its subcellular location is the cytoplasm. The protein localises to the cytosol. It catalyses the reaction RX + glutathione = an S-substituted glutathione + a halide anion + H(+). Functionally, may be involved in the conjugation of reduced glutathione to a wide number of exogenous and endogenous hydrophobic electrophiles and have a detoxification role against certain herbicides. In Arabidopsis thaliana (Mouse-ear cress), this protein is Glutathione S-transferase F7.